The following is a 72-amino-acid chain: uncharacterized protein (72 aa).

Residues 41–58 traverse the membrane as a helical segment; sequence FSFLVHIMCGLTLTSYVI.

It localises to the membrane. This is an uncharacterized protein from Dictyostelium discoideum (Social amoeba).